The chain runs to 1562 residues: Neuralized-like protein 4 (1562 aa).

Residues 1–42 show a composition bias toward gly residues; that stretch reads MAAGSGGSGGSGGGPGPGPGGGGGPSGSGSGPGSNGGLGSGG. 2 disordered regions span residues 1 to 48 and 207 to 236; these read MAAG…HPRT and PEPGFSPPTPIPTPPLEPLAPTEDSALAEQ. 2 consecutive NHR domains span residues 41 to 207 and 317 to 484; these read GGEL…VLPP and ALLF…IVHN. Residues 207 to 224 show a composition bias toward pro residues; the sequence is PEPGFSPPTPIPTPPLEP. S502 is modified (phosphoserine). 2 consecutive NHR domains span residues 520-686 and 716-884; these read RLLF…IVDD and DLRF…ITNA. Residues 691 to 716 are disordered; that stretch reads PVPEPLPEGNNQVSPSSPSSGAGGSD. Position 907 is a phosphoserine (S907). Positions 913–1086 constitute an NHR 5 domain; that stretch reads AHRFHSTCGK…PVRGVSIVSS (174 aa). The segment at 1086-1123 is disordered; sequence STRLEESEGTQPPSPSSDTGSEGEEDDEGEEHGLGGQN. A compositionally biased stretch (acidic residues) spans 1106 to 1115; sequence SEGEEDDEGE. The 164-residue stretch at 1131-1294 folds into the NHR 6 domain; it reads TLEFLENHGK…QCEQVTIVNP (164 aa).

As to quaternary structure, interacts with CCP110; this interaction propmotes CCP110 ubiquitination and degradation via the proteasome pathway. Via its interaction with CCP110, may indirectly interact with CEP97. Interacts with the E3 ubiquitin-protein ligase HERC2 and UBE3A. May interact with MAPK6 and hence mediate MAPK6 interaction with UBE3A. Interaction with UBE3A may be indirect and mediated by HERC2. In terms of processing, ubiquitinated; undergoes HERC2-dependent 'Lys-48' ubiquitination. This ubiquitination leads to proteasomal degradation. In terms of tissue distribution, widely expressed at high levels (including brain).

It is found in the cytoplasm. It localises to the cytoskeleton. The protein localises to the microtubule organizing center. The protein resides in the centrosome. Its subcellular location is the centriole. Promotes CCP110 ubiquitination and proteasome-dependent degradation. By counteracting accumulation of CP110, maintains normal centriolar homeostasis and preventing formation of ectopic microtubular organizing centers. The sequence is that of Neuralized-like protein 4 (NEURL4) from Homo sapiens (Human).